Here is a 376-residue protein sequence, read N- to C-terminus: Dual-specificity RNA methyltransferase RlmN (376 aa).

Residue Glu95 is the Proton acceptor of the active site. The Radical SAM core domain occupies Glu101–Asp339. Cys108 and Cys344 are disulfide-bonded. [4Fe-4S] cluster-binding residues include Cys115, Cys119, and Cys122. S-adenosyl-L-methionine contacts are provided by residues Gly169 to Glu170, Ser201, Ser223 to His225, and Asn301. The S-methylcysteine intermediate role is filled by Cys344.

It belongs to the radical SAM superfamily. RlmN family. The cofactor is [4Fe-4S] cluster.

It is found in the cytoplasm. It carries out the reaction adenosine(2503) in 23S rRNA + 2 reduced [2Fe-2S]-[ferredoxin] + 2 S-adenosyl-L-methionine = 2-methyladenosine(2503) in 23S rRNA + 5'-deoxyadenosine + L-methionine + 2 oxidized [2Fe-2S]-[ferredoxin] + S-adenosyl-L-homocysteine. The enzyme catalyses adenosine(37) in tRNA + 2 reduced [2Fe-2S]-[ferredoxin] + 2 S-adenosyl-L-methionine = 2-methyladenosine(37) in tRNA + 5'-deoxyadenosine + L-methionine + 2 oxidized [2Fe-2S]-[ferredoxin] + S-adenosyl-L-homocysteine. Its function is as follows. Specifically methylates position 2 of adenine 2503 in 23S rRNA and position 2 of adenine 37 in tRNAs. m2A2503 modification seems to play a crucial role in the proofreading step occurring at the peptidyl transferase center and thus would serve to optimize ribosomal fidelity. This Pseudoalteromonas translucida (strain TAC 125) protein is Dual-specificity RNA methyltransferase RlmN.